Consider the following 208-residue polypeptide: Heavy metal-associated isoprenylated plant protein 42 (208 aa).

One can recognise an HMA domain in the interval 6-70 (FPICILKMNL…AVAKLGQSPQ (65 aa)). Positions 93-116 (ATNKTQDKPSPPAPPVTATTPVET) are disordered. Residue Cys205 is modified to Cysteine methyl ester. Cys205 carries the S-farnesyl cysteine lipid modification. Residues 206–208 (SIM) constitute a propeptide, removed in mature form.

This sequence belongs to the HIPP family.

Functionally, probable heavy-metal-binding protein. The chain is Heavy metal-associated isoprenylated plant protein 42 from Arabidopsis thaliana (Mouse-ear cress).